The sequence spans 137 residues: Nucleoside diphosphate kinase (137 aa).

Lysine 9, phenylalanine 57, arginine 85, threonine 91, arginine 102, and asparagine 112 together coordinate ATP. The active-site Pros-phosphohistidine intermediate is the histidine 115.

Belongs to the NDK family. Homotetramer. Mg(2+) is required as a cofactor.

The protein resides in the cytoplasm. It carries out the reaction a 2'-deoxyribonucleoside 5'-diphosphate + ATP = a 2'-deoxyribonucleoside 5'-triphosphate + ADP. It catalyses the reaction a ribonucleoside 5'-diphosphate + ATP = a ribonucleoside 5'-triphosphate + ADP. In terms of biological role, major role in the synthesis of nucleoside triphosphates other than ATP. The ATP gamma phosphate is transferred to the NDP beta phosphate via a ping-pong mechanism, using a phosphorylated active-site intermediate. The sequence is that of Nucleoside diphosphate kinase from Geotalea daltonii (strain DSM 22248 / JCM 15807 / FRC-32) (Geobacter daltonii).